The primary structure comprises 264 residues: Ribonuclease HII (264 aa).

The 195-residue stretch at 69-263 (KVVCGIDEVG…EENAKTITKP (195 aa)) folds into the RNase H type-2 domain. The a divalent metal cation site is built by Asp-75, Glu-76, and Asp-166.

This sequence belongs to the RNase HII family. Requires Mn(2+) as cofactor. It depends on Mg(2+) as a cofactor.

It localises to the cytoplasm. It catalyses the reaction Endonucleolytic cleavage to 5'-phosphomonoester.. Functionally, endonuclease that specifically degrades the RNA of RNA-DNA hybrids. The polypeptide is Ribonuclease HII (Macrococcus caseolyticus (strain JCSC5402) (Macrococcoides caseolyticum)).